Consider the following 274-residue polypeptide: Cytochrome b-c1 complex subunit Rieske, mitochondrial (274 aa).

The Mitochondrial matrix segment spans residues 79–103; that stretch reads SHTDVKVPDFCDYRRPEVLDSTKSS. Residues 104 to 140 form a helical membrane-spanning segment; the sequence is RESSEARKSFSYMVTAVTTVGVAYAAKNAVTQFVSSM. The Mitochondrial intermembrane segment spans residues 141–274; that stretch reads SASADVLAMA…FTSDDMVVVG (134 aa). The Rieske domain occupies 187 to 272; it reads EAAVELSQLR…YEFTSDDMVV (86 aa). [2Fe-2S] cluster contacts are provided by C217, H219, C236, H239, and S241. Cysteines 222 and 238 form a disulfide.

Belongs to the Rieske iron-sulfur protein family. Component of the ubiquinol-cytochrome c oxidoreductase (cytochrome b-c1 complex, complex III, CIII), a multisubunit enzyme composed of 11 subunits. The complex is composed of 3 respiratory subunits cytochrome b, cytochrome c1 and Rieske protein UQCRFS1, 2 core protein subunits UQCRC1/QCR1 and UQCRC2/QCR2, and 6 low-molecular weight protein subunits UQCRH/QCR6, UQCRB/QCR7, UQCRQ/QCR8, UQCR10/QCR9, UQCR11/QCR10 and subunit 9, the cleavage product of Rieske protein UQCRFS1. The complex exists as an obligatory dimer and forms supercomplexes (SCs) in the inner mitochondrial membrane with NADH-ubiquinone oxidoreductase (complex I, CI) and cytochrome c oxidase (complex IV, CIV), resulting in different assemblies (supercomplex SCI(1)III(2)IV(1) and megacomplex MCI(2)III(2)IV(2)). Incorporation of the Rieske protein UQCRFS1 is the penultimate step in complex III assembly. Interacts with TTC19, which is involved in the clearance of UQCRFS1 fragments. As to quaternary structure, component of the ubiquinol-cytochrome c oxidoreductase (cytochrome b-c1 complex, complex III, CIII). Subunit 9 corresponds to the mitochondrial targeting sequence (MTS) of Rieske protein UQCRFS1. It is retained after processing and incorporated inside complex III, where it remains bound to the complex and localizes between the 2 core subunits UQCRC1/QCR1 and UQCRC2/QCR2. [2Fe-2S] cluster serves as cofactor. In terms of processing, proteolytic processing is necessary for the correct insertion of UQCRFS1 in the complex III dimer. Several fragments are generated during UQCRFS1 insertion, most probably due to the endogenous matrix-processing peptidase (MPP) activity of the 2 core protein subunits UQCRC1/QCR1 and UQCRC2/QCR2, which are homologous to the 2 mitochondrial-processing peptidase (MPP) subunits beta-MPP and alpha-MPP respectively. The action of the protease is also necessary for the clearance of the UQCRFS1 fragments.

Its subcellular location is the mitochondrion inner membrane. The catalysed reaction is a quinol + 2 Fe(III)-[cytochrome c](out) = a quinone + 2 Fe(II)-[cytochrome c](out) + 2 H(+)(out). Component of the ubiquinol-cytochrome c oxidoreductase, a multisubunit transmembrane complex that is part of the mitochondrial electron transport chain which drives oxidative phosphorylation. The respiratory chain contains 3 multisubunit complexes succinate dehydrogenase (complex II, CII), ubiquinol-cytochrome c oxidoreductase (cytochrome b-c1 complex, complex III, CIII) and cytochrome c oxidase (complex IV, CIV), that cooperate to transfer electrons derived from NADH and succinate to molecular oxygen, creating an electrochemical gradient over the inner membrane that drives transmembrane transport and the ATP synthase. The cytochrome b-c1 complex catalyzes electron transfer from ubiquinol to cytochrome c, linking this redox reaction to translocation of protons across the mitochondrial inner membrane, with protons being carried across the membrane as hydrogens on the quinol. In the process called Q cycle, 2 protons are consumed from the matrix, 4 protons are released into the intermembrane space and 2 electrons are passed to cytochrome c. The Rieske protein is a catalytic core subunit containing a [2Fe-2S] iron-sulfur cluster. It cycles between 2 conformational states during catalysis to transfer electrons from the quinol bound in the Q(0) site in cytochrome b to cytochrome c1. Incorporation of UQCRFS1 is the penultimate step in complex III assembly. Its function is as follows. Component of the ubiquinol-cytochrome c oxidoreductase (cytochrome b-c1 complex, complex III, CIII). UQCRFS1 undergoes proteolytic processing once it is incorporated in the complex III dimer. One of the fragments, called subunit 9, corresponds to its mitochondrial targeting sequence (MTS). The proteolytic processing is necessary for the correct insertion of UQCRFS1 in the complex III dimer, but the persistence of UQCRFS1-derived fragments may prevent newly imported UQCRFS1 to be processed and assembled into complex III and is detrimental for the complex III structure and function. In Colobus polykomos (Western black-and-white colobus monkey), this protein is Cytochrome b-c1 complex subunit Rieske, mitochondrial (UQCRFS1).